The primary structure comprises 486 residues: Regulatory protein ViaA (486 aa).

This sequence belongs to the ViaA family. In terms of assembly, homodimer. Interacts with RavA.

The protein localises to the cytoplasm. Component of the RavA-ViaA chaperone complex, which may act on the membrane to optimize the function of some of the respiratory chains. ViaA stimulates the ATPase activity of RavA. The polypeptide is Regulatory protein ViaA (Erwinia tasmaniensis (strain DSM 17950 / CFBP 7177 / CIP 109463 / NCPPB 4357 / Et1/99)).